Consider the following 918-residue polypeptide: Cell surface glycoprotein 1 (918 aa).

Residues methionine 1–alanine 34 form the signal peptide. N-linked (GlcNAc...) asparagine glycans are attached at residues asparagine 37, asparagine 56, asparagine 110, asparagine 219, asparagine 250, asparagine 261, and asparagine 291. Asparagine 306 is a glycosylation site (N-linked (GalNAc...) asparagine). N-linked (GlcNAc...) asparagine glycans are attached at residues asparagine 318, asparagine 343, asparagine 392, asparagine 434, asparagine 487, asparagine 541, asparagine 555, asparagine 572, asparagine 585, asparagine 614, asparagine 715, asparagine 776, asparagine 836, and asparagine 845. The tract at residues histidine 815–glycine 894 is disordered. Polar residues predominate over residues tyrosine 833 to valine 846. The segment covering valine 849–aspartate 875 has biased composition (acidic residues). A helical membrane pass occupies residues glycine 894–valine 914. The PGF sorting signal motif lies at proline 895–phenylalanine 897.

Belongs to the halobacterial S-layer protein family. In terms of processing, N-glycosylated on Asn-306; this N-linked glycan is a branched trisaccharide containing 2-amino-6-sulfo-2,6-dideoxy-glucose (sulfoquinovosamine). Post-translationally, cleaved by the archaeosortase ArtA at the C-terminus, with removal of a short hydrophobic segment. Lipidation.

The protein localises to the secreted. The protein resides in the cell wall. It localises to the S-layer. It is found in the cell membrane. S-layer protein. The S-layer is a paracrystalline mono-layered assembly of proteins which coat the surface of the cell. In H.hispanica, the S-layer contains two different glycoproteins, Slg1 and Slg2, which share highly similar amino acid sequences. The sequence is that of Cell surface glycoprotein 1 from Haloarcula hispanica (strain ATCC 33960 / DSM 4426 / JCM 8911 / NBRC 102182 / NCIMB 2187 / VKM B-1755).